A 267-amino-acid polypeptide reads, in one-letter code: Hydroxynaphthalene reductase-like protein Arp2 (267 aa).

The NADP(+) site is built by I25, N45, D71, and N98. Catalysis depends on proton donor residues S147 and S148. NADP(+)-binding residues include Y162, K166, V195, and T197. Y162 (proton acceptor) is an active-site residue. Residue K166 is the Lowers pKa of active site Tyr of the active site.

It belongs to the short-chain dehydrogenases/reductases (SDR) family.

Hydroxynaphthalene reductase-like protein; part of the Pks2 gene cluster that mediates the formation of infectious structures (appressoria), enabling these fungi to kill insects faster. The product of the Pks2 gene cluster is different from the one of Pks1 and has still not been identified. This Metarhizium anisopliae (strain ARSEF 549) protein is Hydroxynaphthalene reductase-like protein Arp2.